Reading from the N-terminus, the 602-residue chain is Alpha-(1-&gt;6)-mannopyranosyltransferase B (602 aa).

The next 13 helical transmembrane spans lie at 105-125 (IGTMGALMIAFGALGAGALPV), 148-168 (MIVLIGVGFLVLAWVLMAPLV), 190-210 (TFGAWVAPIMLTAPLFTQDIY), 244-264 (VPFIWAQSPSPYGPVALSIAA), 274-294 (IVGGVLAHRIASLLGVVAAGW), 320-340 (LILHLIGGIHNESILLGFLLV), 368-388 (GVLISCAGLVKVTGFIGLGFV), 404-424 (VVAIGVAGLVQVAALVITVVV), 448-468 (WMSMTTNIGVISGFIGMNLGL), 472-492 (TAAMLVVTRAAGIAVAAAFMV), 503-523 (IHAVGGLGVATFVLVILFPVV), 546-566 (LGVIAYSTAFSFFVLPRGLAL), and 571-591 (VFSIYFGAALGFSILLLVGWW).

It belongs to the MptA/B family.

The protein localises to the membrane. It functions in the pathway cell wall biogenesis; cell wall polysaccharide biosynthesis. In terms of biological role, involved in the initiation of core alpha-(1-&gt;6) mannan biosynthesis of lipomannan (LM-A) and multi-mannosylated polymer (LM-B), extending triacylatedphosphatidyl-myo-inositol dimannoside (Ac1PIM2) and mannosylated glycolipid, 1,2-di-O-C16/C18:1-(alpha-D-mannopyranosyl)-(1-&gt;4)-(alpha-D-glucopyranosyluronic acid)-(1-&gt;3)-glycerol (Man1GlcAGroAc2), respectively. Catalyzes the addition of alpha-(1-&gt;6)-mannose residue. The protein is Alpha-(1-&gt;6)-mannopyranosyltransferase B (mptB) of Corynebacterium glutamicum (strain ATCC 13032 / DSM 20300 / JCM 1318 / BCRC 11384 / CCUG 27702 / LMG 3730 / NBRC 12168 / NCIMB 10025 / NRRL B-2784 / 534).